Consider the following 404-residue polypeptide: Probable tRNA sulfurtransferase (404 aa).

Residues 61-166 (EAVSERLKDV…SGYSYIMCDE (106 aa)) form the THUMP domain. Residues 184 to 185 (LL), 209 to 210 (HF), R266, G288, and Q297 each bind ATP.

It belongs to the ThiI family.

The protein resides in the cytoplasm. The catalysed reaction is [ThiI sulfur-carrier protein]-S-sulfanyl-L-cysteine + a uridine in tRNA + 2 reduced [2Fe-2S]-[ferredoxin] + ATP + H(+) = [ThiI sulfur-carrier protein]-L-cysteine + a 4-thiouridine in tRNA + 2 oxidized [2Fe-2S]-[ferredoxin] + AMP + diphosphate. The enzyme catalyses [ThiS sulfur-carrier protein]-C-terminal Gly-Gly-AMP + S-sulfanyl-L-cysteinyl-[cysteine desulfurase] + AH2 = [ThiS sulfur-carrier protein]-C-terminal-Gly-aminoethanethioate + L-cysteinyl-[cysteine desulfurase] + A + AMP + 2 H(+). Its pathway is cofactor biosynthesis; thiamine diphosphate biosynthesis. Catalyzes the ATP-dependent transfer of a sulfur to tRNA to produce 4-thiouridine in position 8 of tRNAs, which functions as a near-UV photosensor. Also catalyzes the transfer of sulfur to the sulfur carrier protein ThiS, forming ThiS-thiocarboxylate. This is a step in the synthesis of thiazole, in the thiamine biosynthesis pathway. The sulfur is donated as persulfide by IscS. The polypeptide is Probable tRNA sulfurtransferase (Bacillus cereus (strain ATCC 14579 / DSM 31 / CCUG 7414 / JCM 2152 / NBRC 15305 / NCIMB 9373 / NCTC 2599 / NRRL B-3711)).